The primary structure comprises 195 residues: Large ribosomal subunit protein uL18 (195 aa).

This sequence belongs to the universal ribosomal protein uL18 family. As to quaternary structure, part of the 50S ribosomal subunit. Contacts the 5S and 23S rRNAs.

This is one of the proteins that bind and probably mediate the attachment of the 5S RNA into the large ribosomal subunit, where it forms part of the central protuberance. This is Large ribosomal subunit protein uL18 from Metallosphaera sedula (strain ATCC 51363 / DSM 5348 / JCM 9185 / NBRC 15509 / TH2).